The chain runs to 934 residues: Serine/threonine-protein kinase PknD (934 aa).

The Protein kinase domain occupies 4–296; that stretch reads YELIRLIGKG…ELRQALQPYL (293 aa). Residues 10-18 and Lys33 contribute to the ATP site; that span reads IGKGGMGEV. Asp138 acts as the Proton acceptor in catalysis.

It belongs to the protein kinase superfamily. Ser/Thr protein kinase family. Interacts with Pkn1. In terms of processing, autophosphorylated on serine and threonine residues.

It catalyses the reaction L-seryl-[protein] + ATP = O-phospho-L-seryl-[protein] + ADP + H(+). The enzyme catalyses L-threonyl-[protein] + ATP = O-phospho-L-threonyl-[protein] + ADP + H(+). Its function is as follows. Together with the serine/threonine kinase Pkn1, may play a role in the specific interactions with host proteins during intracellular growth. Autophosphorylates and also phosphorylates Pkn1. This is Serine/threonine-protein kinase PknD from Chlamydia trachomatis serovar D (strain ATCC VR-885 / DSM 19411 / UW-3/Cx).